A 149-amino-acid polypeptide reads, in one-letter code: Nucleoside diphosphate kinase (149 aa).

Residues lysine 11, phenylalanine 59, arginine 87, threonine 93, arginine 104, and asparagine 114 each contribute to the ATP site. Catalysis depends on histidine 117, which acts as the Pros-phosphohistidine intermediate.

This sequence belongs to the NDK family. As to quaternary structure, homotetramer. It depends on Mg(2+) as a cofactor.

The protein localises to the cytoplasm. The catalysed reaction is a 2'-deoxyribonucleoside 5'-diphosphate + ATP = a 2'-deoxyribonucleoside 5'-triphosphate + ADP. It carries out the reaction a ribonucleoside 5'-diphosphate + ATP = a ribonucleoside 5'-triphosphate + ADP. Functionally, major role in the synthesis of nucleoside triphosphates other than ATP. The ATP gamma phosphate is transferred to the NDP beta phosphate via a ping-pong mechanism, using a phosphorylated active-site intermediate. In Treponema pallidum (strain Nichols), this protein is Nucleoside diphosphate kinase.